Here is a 1033-residue protein sequence, read N- to C-terminus: NACHT, LRR and PYD domains-containing protein 3 (1033 aa).

Residues 1-91 form the Pyrin domain; the sequence is MTSVRCKLAQ…WEKAKKDQPE (91 aa). A Phosphoserine modification is found at S3. Residues C6 and C104 are joined by a disulfide bond. Position 11 is a phosphotyrosine (Y11). C126 carries the S-palmitoyl cysteine lipid modification. A required for binding to phosphatidylinositol 4-phosphate (PtdIns4P) region spans residues 127–130; that stretch reads KKKK. Phosphotyrosine; by BTK occurs at positions 132, 136, and 145. The region spanning 136 to 206 is the FISNA domain; sequence YRRHVRSRFY…SSLKLELLFE (71 aa). Phosphoserine is present on S157. Position 164 is a phosphotyrosine; by BTK (Y164). T165 contributes to the ATP binding site. S194 is subject to Phosphoserine; by MAPK8. The residue at position 197 (S197) is a Phosphoserine. One can recognise an NACHT domain in the interval 216–532; sequence HTVVFQGAAG…EFFAAMYYLL (317 aa). 222 to 230 is a binding site for ATP; it reads GAAGIGKTI. S261 carries the phosphoserine modification. S291 bears the Phosphoserine; by PKD/PRKD1 mark. K320 is covalently cross-linked (Glycyl lysine isopeptide (Lys-Gly) (interchain with G-Cter in ubiquitin)). S330 bears the Phosphoserine mark. Positions 351 to 355 match the KFERQ-like motif 1 motif; that stretch reads LEKLQ. K426 participates in a covalent cross-link: Glycyl lysine isopeptide (Lys-Gly) (interchain with G-Cter in ubiquitin). H518 is a binding site for ATP. The KFERQ-like motif 2 signature appears at 601-605; that stretch reads QVRLE. A Glycyl lysine isopeptide (Lys-Gly) (interchain with G-Cter in ubiquitin) cross-link involves residue K687. Phosphoserine is present on residues S725 and S732. LRR repeat units lie at residues 739–759, 768–789, 796–816, 825–846, and 853–873; these read SLTELDLSDNTLGDPGMRVLC, NIQRLWLGRCGLSHQCCFDISS, KLVELDLSDNALGDFGIRLLC, NLQKLWLVSCCLTSACCQDLAL, and SLTRLYIGENALGDSGVQVLC. Residues 795–799 carry the KFERQ-like motif 3 motif; that stretch reads QKLVE. Position 803 is a phosphoserine; by CSNK1A1 (S803). 3 S-palmitoyl cysteine lipidation sites follow: C834, C835, and C841. Residue Y858 is modified to Phosphotyrosine. A Glycyl lysine isopeptide (Lys-Gly) (interchain with G-Cter in ubiquitin) cross-link involves residue K875. LRR repeat units follow at residues 882–903, 910–930, 939–960, and 967–988; these read NLQKLGLVNSGLTSICCSALTS, NFTHLYLRSNALGDTGLRLLC, KLQMLELDNCSLTSHSCWNLST, and SLRKLNLGNNDLGDLCVVTLCE. C955 carries S-palmitoyl cysteine lipidation. K970 participates in a covalent cross-link: Glycyl lysine isopeptide (Lys-Gly) (interchain with G-Cter in ubiquitin). A KFERQ-like motif 4 motif is present at residues 988-992; that stretch reads EVLKQ. Position 1032 is a phosphoserine (S1032).

Belongs to the NLRP family. As to quaternary structure, sensor component of NLRP3 inflammasomes; inflammasomes are supramolecular complexes that assemble in the cytosol in response to pathogens and other damage-associated signals and play critical roles in innate immunity and inflammation. The core of NLRP3 inflammasomes consists of a signal sensor component (NLRP3), an adapter (PYCARD/ASC), which recruits an effector pro-inflammatory caspase (CASP1 and, possibly, CASP4 and CASP5). Homodecamer; inactive NLRP3 forms homodecameric double-ring cages that hide pyrin domains within NACHT-LRR rings to avoid premature activation. Interacts (via pyrin domain) with PYCARD/ASC (via pyrin domain); interaction is direct. Interacts (via LRR repeat domain) with NEK7 (via N-terminus); the interaction is required for the formation of the complex NLRP3:PYCARD, oligomerization of PYCARD/ASC and activation of CASP1. Interacts (via LRR repeat domain) with NR4A1/Nur77 (via N-terminus); the interaction is direct, requires activation of NR4A1 by its ligands NBRE-containing dsDNA and lipopolysaccharide, and stimulates the association of NLRP3 with NEK7 for non-canonical NLRP3 inflammasome activation. Interacts with CARD8; leading to inhibit formation of the NLRP3 inflammasome. Interacts with MEFV; this interaction targets NLRP3 to degradation by autophagy, hence preventing excessive IL1B- and IL18-mediated inflammation. Interacts with EIF2AK2/PKR; this interaction requires EIF2AK2 activity, is accompanied by EIF2AK2 autophosphorylation and promotes inflammasome assembly in response to specific stimuli. Interacts with GBP5 (via DAPIN domain); this interaction promotes inflammasome assembly in response to microbial and soluble, but not crystalline, agents. Interacts with PML (isoform PML-1) (via the leucine-rich repeat (LRR) domain); PML-mediated increase in NLRP3 inflammasome activation does not depend upon this interaction. Interacts (via NACHT domain) with DHX33 (via DEAH box); NLRP3 activation in presence of cytosolic dsRNA is mediated by DHX33. Interacts (via NACHT and LRR domains) with ARRB2; this interaction is direct and inducible by polyunsaturated fatty acids (PUFAs). Interacts (via NACHT domain) with DDX3X under both LPS-primed and inflammasome-activating conditions. Interacts with IRF4 (via the LRR domain); this interaction is direct and is required for optimal IRF4 binding to IL4 promoter and efficient IL4 transactivation during differentiation of Th2 helper T-cells. Interacts with MAVS; promoting localization to mitochondria and activation of the NLRP3 inflammasome. Interacts with MARK4; promoting localization of NLRP3 to the microtubule organizing center (MTOC). Interacts with TRIM50; this interaction also promotes NLRP3 oligomerization and subsequent inflammasome activation. Interacts with IRGM; preventing NLRP3 inflammasome assembly and promoting NLRP3 degradation. Interacts (via KFERQ-like motifs) with HSPA8/HSC70; promoting NLRP3 degradation by the chaperone-mediated autophagy pathway. Interacts (via NACHT and LLR domains) with ABHD8; this interaction is enhanced in the presence of NLRP3 inflammasome inducers, such as ATP, nigericin, silica, or alum. Interaction with ABHD8 leads the recruitment of ZDHHC12, hence facilitating NLRP3 palmitoylation and degradation by the chaperone-mediated autophagy pathway (CMA), therefore attenuating NLRP3 inflammasome activation. Phosphorylation at Ser-194 by MAPK8/JNK1 increases inflammasome activation by promoting deubiquitination by BRCC3 and NLRP3 homooligomerization. Phosphorylation at Ser-803 by CSNK1A1 prevents inflammasome activation by preventing NEK7 recruitment. Phosphorylation at Ser-3 in the pyrin domain inhibits homomultimerization of NLRP3 and activation of the NLRP3 inflammasome: dephosphorylation by protein phosphatase 2A (PP2A) promotes assembly of the NLRP3 inflammasome. Phosphorylation at Ser-291 by PKD/PRKD1 promotes NLRP3 inflammasome assembly. Phosphorylation by ERK1/MAPK3 promotes NLRP3 inflammasome assembly. Phosphorylation by BTK (at Tyr-132, Tyr-136, Tyr-145 and Tyr-164) in the region that mediates binding to phosphatidylinositol phosphate, promotes relocalization of NLRP3 and assembly of the NLRP3 inflammasome. Phosphorylation at Tyr-858 inhibits NLRP3 inflammasome assembly: dephosphorylation by PTPN22 promotes inflammasome activation Phosphorylated by LATS1 and LATS2 at Ser-261 following palmitoylation by ZDHHC1, promoting its relocalization to the microtubule organizing center (MTOC), where NLRP3 is activated by NEK7, leading to inflammasome assembly and activation. In terms of processing, ubiquitinated; undergoes both 'Lys-48'- and 'Lys-63'-linked polyubiquitination. Ubiquitination does not lead to degradation, but inhibits inflammasome activation. Deubiquitination is catalyzed by BRCC3 and associated with NLRP3 activation and inflammasome assembly. This process can be induced by the activation of Toll-like receptors (by LPS), through a non-transcriptional pathway dependent on the mitochondrial production of reactive oxygen species, and by ATP. Ubiquitinated by TRIM31 via 'Lys-48'-linked ubiquitination, leading to its degradation by the proteasome. Ubiquitinated at Lys-687 by the SCF(FBXL2) complex, leading to its degradation by the proteasome. Ubiquitinated by TRIM35 via 'lys-48' and 'Lys-63'-linked ubiquitination leading to inhibition of NLRP3 inflammasome activation. Undergoes 'Lys-27'-linked polyubiquitination by MARCHF5, leading to NLRP3-NEK7 complex formation and NLRP3 oligomerization. Post-translationally, the disulfide bond in the pyrin domain might play a role in reactive oxygen species-mediated activation. Palmitoylation by ZDHHC12 promotes NLRP3 degradation by the chaperone-mediated autophagy pathway (CMA) and therefore limits NLRP3 inflammasome activation. Interaction with ZDHHC12, and hence NLRP3 palmitoylation, is enhanced by ABHD8. Following palmitoylation, HSPA8/HSC70 recognizes and binds the KFERQ-like motifs on NLRP3 and promotes NLRP3 recruitment to lysosomes, where it is degraded via the chaperone-mediated autophagy pathway in a LAMP2-dependent process. Palmitoylation at Cys-834 and Cys-835 by ZDHHC5 enhances its binding to NEK7 leading to inflammasome assembly and activation. Palmitoylation at Cys-126 and Cys-955 by ZDHHC1 facilitates phosphorylation at Ser-261 by LATS1 and LATS2, promoting its relocalization to the microtubule organizing center (MTOC), where NLRP3 is activated by NEK7, leading to inflammasome assembly and activation. Depalmitoylated by ABHD17A. In terms of processing, degraded via selective autophagy following interaction with Irgm1. Irgm1 promotes NLRP3 recruitment to autophagosome membranes, promoting its SQSTM1/p62-dependent autophagy-dependent degradation. As to expression, expressed with high levels in peripheral blood leukocytes, including Th2 lymphocytes and macrophages. Expressed at low levels in resting osteoblasts (at protein level).

The protein localises to the cytoplasm. Its subcellular location is the cytosol. The protein resides in the inflammasome. It localises to the cytoskeleton. It is found in the microtubule organizing center. The protein localises to the golgi apparatus membrane. Its subcellular location is the endoplasmic reticulum. The protein resides in the mitochondrion. It localises to the secreted. It is found in the nucleus. It catalyses the reaction ATP + H2O = ADP + phosphate + H(+). Its activity is regulated as follows. Under resting conditions, NLRP3 binds ADP and is autoinhibited. Inactive NLRP3 forms homodecameric double-ring cages that hide pyrin domains within NACHT-LRR rings to avoid premature activation. NLRP3 activation stimuli include extracellular ATP, nigericin, reactive oxygen species, crystals of monosodium urate or cholesterol, amyloid-beta fibers, environmental or industrial particles and nanoparticles, such as asbestos, silica, aluminum salts, cytosolic dsRNA, etc. Almost all stimuli trigger intracellular K(+) efflux. These stimuli lead to membrane perturbations that induce activation of NLRP3. Upon activation, NLRP3 is transported to microtubule organizing center (MTOC), where it is unlocked by NEK7, leading to its relocalization to dispersed trans-Golgi network (dTGN) vesicle membranes and recruitment of PYCARD/ASC for the formation of an active inflammasome complex. NEK7-activated NLRP3 forms a disk-shaped inflammasome. NLRP3 and PYCARD/ASC interact via their respective pyrin domains; interaction initiates speck formation (nucleation) which greatly enhances further addition of soluble PYCARD/ASC molecules to the speck in a prion-like polymerization process. Clustered PYCARD/ASC nucleates the formation of CASP1 filaments through the interaction of their respective CARD domains, acting as a platform for CASP1 polymerization and activation. Active CASP1 then processes IL1B and IL18 precursors, leading to the release of mature cytokines in the extracellular milieu and inflammatory response. NLRP3 inflammasome assembly is inhibited by IRGM, which impedes NLRP3 oligomerization. NLRP3 inflammasome is inhibited by cyclic AMP (cAMP), which directly binds NLRP3; inhibition is relieved by calcium-sensing receptor CASR, which inhibits production of cAMP. Specifically inhibited by sulfonylurea MCC950 (also named CP-456,773, CRID3), a potent and specific small-molecule inhibitor of the NLRP3 inflammasome that acts by preventing ATP hydrolysis. Its function is as follows. Sensor component of the NLRP3 inflammasome, which mediates inflammasome activation in response to defects in membrane integrity, leading to secretion of inflammatory cytokines IL1B and IL18 and pyroptosis. In response to pathogens and other damage-associated signals that affect the integrity of membranes, initiates the formation of the inflammasome polymeric complex composed of NLRP3, CASP1 and PYCARD/ASC. Recruitment of pro-caspase-1 (proCASP1) to the NLRP3 inflammasome promotes caspase-1 (CASP1) activation, which subsequently cleaves and activates inflammatory cytokines IL1B and IL18 and gasdermin-D (GSDMD), promoting cytokine secretion and pyroptosis. Activation of NLRP3 inflammasome is also required for HMGB1 secretion; stimulating inflammatory responses. Under resting conditions, ADP-bound NLRP3 is autoinhibited. NLRP3 activation stimuli include extracellular ATP, nigericin, reactive oxygen species, crystals of monosodium urate or cholesterol, amyloid-beta fibers, environmental or industrial particles and nanoparticles, such as asbestos, silica, aluminum salts, cytosolic dsRNA, etc. Almost all stimuli trigger intracellular K(+) efflux. These stimuli lead to membrane perturbation and activation of NLRP3. Upon activation, NLRP3 is transported to microtubule organizing center (MTOC), where it is unlocked by NEK7, leading to its relocalization to dispersed trans-Golgi network (dTGN) vesicle membranes and formation of an active inflammasome complex. Associates with dTGN vesicle membranes by binding to phosphatidylinositol 4-phosphate (PtdIns4P). Shows ATPase activity. Functionally, independently of inflammasome activation, regulates the differentiation of T helper 2 (Th2) cells and has a role in Th2 cell-dependent asthma and tumor growth. During Th2 differentiation, required for optimal IRF4 binding to IL4 promoter and for IRF4-dependent IL4 transcription. Binds to the consensus DNA sequence 5'-GRRGGNRGAG-3'. May also participate in the transcription of IL5, IL13, GATA3, CCR3, CCR4 and MAF. The polypeptide is NACHT, LRR and PYD domains-containing protein 3 (Mus musculus (Mouse)).